We begin with the raw amino-acid sequence, 215 residues long: Adenylate kinase (215 aa).

An ATP-binding site is contributed by 10–15 (GAGKGT). The segment at 30–59 (STGDMFRLAIKEGTELGKKAKEFMDQGDLV) is NMP. AMP-binding positions include T31, R36, 57–59 (DLV), 85–88 (GFPR), and Q92. Positions 126-163 (GRRICPTCGTAYHVVYNPPKEEGICDKDGSQLIQRDDD) are LID. R127 contacts ATP. Zn(2+) is bound by residues C130, C133, C150, and D153. R160 and R171 together coordinate AMP. R199 serves as a coordination point for ATP.

Belongs to the adenylate kinase family. As to quaternary structure, monomer.

It is found in the cytoplasm. It carries out the reaction AMP + ATP = 2 ADP. The protein operates within purine metabolism; AMP biosynthesis via salvage pathway; AMP from ADP: step 1/1. Its function is as follows. Catalyzes the reversible transfer of the terminal phosphate group between ATP and AMP. Plays an important role in cellular energy homeostasis and in adenine nucleotide metabolism. This chain is Adenylate kinase, found in Oceanobacillus iheyensis (strain DSM 14371 / CIP 107618 / JCM 11309 / KCTC 3954 / HTE831).